We begin with the raw amino-acid sequence, 159 residues long: Ribonuclease H (159 aa).

Positions 1 to 142 (MHKQVEIFTD…CDELAKAAAQ (142 aa)) constitute an RNase H type-1 domain. Mg(2+) is bound by residues Asp-10, Glu-48, Asp-70, and Asp-134. The tract at residues 135–159 (ELAKAAAQSPTKEDTGYLESQQDKT) is disordered. Residues 145–159 (TKEDTGYLESQQDKT) are compositionally biased toward basic and acidic residues.

The protein belongs to the RNase H family. Monomer. The cofactor is Mg(2+).

Its subcellular location is the cytoplasm. The enzyme catalyses Endonucleolytic cleavage to 5'-phosphomonoester.. Endonuclease that specifically degrades the RNA of RNA-DNA hybrids. This is Ribonuclease H from Proteus mirabilis (strain HI4320).